The following is a 457-amino-acid chain: Transcription factor PCF7 (457 aa).

A coiled-coil region spans residues 58–84; sequence STLHYLLQEKERAQQAHEQLQIYQQQQ. Positions 95–119 are disordered; that stretch reads RQPASRGPGGGGGGGDGGGSSGEST. The segment covering 101-115 has biased composition (gly residues); the sequence is GPGGGGGGGDGGGSS. A TCP domain is found at 140–198; that stretch reads RKDRHSKVCTARGLRDRRVRLAAHTAIRFYDVQDRLGYDRPSKAVDWLMRNAKAAIDEL. 2 disordered regions span residues 199 to 231 and 263 to 299; these read PDRA…GFGN and KSLF…SNQQ. Low complexity-rich tracts occupy residues 210–225 and 268–278; these read AAST…ATST and SSSTASGAASA.

Forms homodimers and heterodimers.

Its subcellular location is the nucleus. Its function is as follows. Transcription activator. Binds the promoter core sequence 5'-GGNCC-3'. This is Transcription factor PCF7 (PCF7) from Oryza sativa subsp. japonica (Rice).